A 302-amino-acid polypeptide reads, in one-letter code: Potassium/proton antiporter CemA (302 aa).

The next 4 helical transmembrane spans lie at 55–75 (VFVSIQCLLSLIFIPLIITFL), 187–207 (FVSFGTFALLVIILKPQIIIL), 225–247 (FLLILGTDLLVGFHSPRGWELFL), and 262–282 (FIFLFVATLPVLLDTVFKYWI).

This sequence belongs to the CemA family.

Its subcellular location is the plastid. It localises to the chloroplast inner membrane. It carries out the reaction K(+)(in) + H(+)(out) = K(+)(out) + H(+)(in). Its function is as follows. Contributes to K(+)/H(+) antiport activity by supporting proton efflux to control proton extrusion and homeostasis in chloroplasts in a light-dependent manner to modulate photosynthesis. Prevents excessive induction of non-photochemical quenching (NPQ) under continuous-light conditions. Indirectly promotes efficient inorganic carbon uptake into chloroplasts. The polypeptide is Potassium/proton antiporter CemA (Tupiella akineta (Green alga)).